The primary structure comprises 334 residues: NH(3)-dependent NAD(+) synthetase (334 aa).

An ATP-binding site is contributed by 47–54 (GLSGGIDS). Mg(2+) is bound at residue Asp-53. Deamido-NAD(+) is bound at residue Arg-183. Position 203 (Thr-203) interacts with ATP. Mg(2+) is bound at residue Glu-208. The deamido-NAD(+) site is built by Lys-216 and Asp-223. Lys-232 and Thr-254 together coordinate ATP.

It belongs to the NAD synthetase family. Homodimer.

The enzyme catalyses deamido-NAD(+) + NH4(+) + ATP = AMP + diphosphate + NAD(+) + H(+). The protein operates within cofactor biosynthesis; NAD(+) biosynthesis; NAD(+) from deamido-NAD(+) (ammonia route): step 1/1. Catalyzes the ATP-dependent amidation of deamido-NAD to form NAD. Uses ammonia as a nitrogen source. This is NH(3)-dependent NAD(+) synthetase from Rhizobium meliloti (strain 1021) (Ensifer meliloti).